Consider the following 405-residue polypeptide: MADLLPEHPEFLWANPEPKKSYDVVIVGGGGHGLATAYYLAKNHGITNVAVLEKGWLAGGNMARNTTIIRSNYLWDESAGIYEKSLKLWEQLPEELDYDFLFSQRGVLNLAHTLGDVRESIRRVEANKFNGVDAEWLTPEQVKEVCPIINIGDDIRYPVMGATYQPRAGIAKHDHVAWAFARKANEMGVDIIQNCEVTGFLKDGEKVTGVKTTRGTIHAGKVALAGAGHSSVLAELAGFELPIQSHPLQALVSELFEPVHPTVVMSNHIHVYVSQAHKGELVMGAGIDTYNGYGQRGAFHVIEEQMAAAVELFPIFARAHVLRTWGGIVDTTMDALPIISKTPIQNLYVNCGWGTGGFKGTPGAGFTLAHTIANDEAHALNAPFSLERFETGHLIDEHGAAAVAH.

FAD-binding residues include Gly-31, His-32, Glu-53, Asn-61, Met-62, Thr-66, and Ile-68. Tele-8alpha-FMN histidine is present on His-173. The FAD site is built by Val-197, Gly-354, Gly-357, and Lys-359.

It belongs to the SoxB family. In terms of assembly, heterotetramer composed of subunits alpha (SoxA), beta (SoxB), gamma (SoxG) and delta (SoxD). FAD serves as cofactor. FMN is required as a cofactor.

It localises to the cytoplasm. The enzyme catalyses sarcosine + (6S)-5,6,7,8-tetrahydrofolate + O2 = (6R)-5,10-methylene-5,6,7,8-tetrahydrofolate + glycine + H2O2. The catalysed reaction is sarcosine + O2 + H2O = formaldehyde + glycine + H2O2. In the presence of tetrahydrofolate, catalyzes the oxidative demethylation of sarcosine to yield glycine, 5,10-methylenetetrahydrofolate and hydrogen peroxide. In the absence of tetrahydrofolate, catalyzes the oxidative demethylation of sarcosine to yield glycine, formaldehyde and hydrogen peroxide. This is Sarcosine oxidase subunit beta (soxB) from Arthrobacter sp.